The chain runs to 148 residues: Protein-arginine-phosphatase (148 aa).

C9 acts as the Nucleophile in catalysis. Position 10-15 (10-15) interacts with substrate; sequence TGNTCR. The active site involves R15. Residue D117 is the Proton donor of the active site.

This sequence belongs to the low molecular weight phosphotyrosine protein phosphatase family. Is present in solution as a mixture of monomers, dimers and higher order oligomers (trimers and tetramers).

The catalysed reaction is N(omega)-phospho-L-arginyl-[protein] + H2O = L-arginyl-[protein] + phosphate. Irreversibly inhibited by the synthetic inhibitor cyc-SeCN-amidine, which inactivates the enzyme by inducing disulfide bond formation between the two active site cysteine residues Cys-9 and Cys-14. Functionally, catalyzes the specific dephosphorylation of phosphoarginine residues in proteins. Probably counteracts the protein arginine kinase McsB in vivo. Exhibits almost no activity against pTyr peptides. Protein arginine phosphorylation has a physiologically important role and is involved in the regulation of many critical cellular processes, such as protein homeostasis, motility, competence, and stringent and stress responses, by regulating gene expression and protein activity. The protein is Protein-arginine-phosphatase (ywle) of Geobacillus stearothermophilus (Bacillus stearothermophilus).